A 405-amino-acid polypeptide reads, in one-letter code: Envelope glycoprotein M (405 aa).

At 1–17 (MKSSKNDTFVYRTWVKT) the chain is on the intravirion side. Residues 18 to 38 (LVVYFVMFVMSAVVPITAMFP) traverse the membrane as a helical segment. Residues 39 to 76 (NLGYPCYFNALVDYGALNLTNYNLAHHLTPTLYLEPPE) lie on the Virion surface side of the membrane. A helical transmembrane segment spans residues 77–97 (MFVYITLVFIADCVAFIYYAC). The Intravirion segment spans residues 98–121 (GEVALIKARKKVSGLTDLSAWVSA). The helical transmembrane segment at 122–142 (VGSPTVLFLAILKLWSIQVFI) threads the bilayer. The Virion surface segment spans residues 143–149 (QVLSYKH). A helical transmembrane segment spans residues 150-170 (VFLSAFVYFLHFLASVLHACA). Residues 171-192 (CVTRFSPVWVVKAQDNSIPQDT) lie on the Intravirion side of the membrane. The chain crosses the membrane as a helical span at residues 193–215 (FLWWVVFYLKPVVTNLYLGCLAL). Residues 216-245 (ETLVFSLSVFLALGNSFYFMVGDMVLGAVN) lie on the Virion surface side of the membrane. A helical transmembrane segment spans residues 246-266 (LFLILPIFWYILTEVWLASFM). Residue Arg267 is a topological domain, intravirion. Residues 268 to 288 (HNFGFYCGMFIASIILILPLV) form a helical membrane-spanning segment. Over 289 to 299 (RYEAVFVSAKL) the chain is Virion surface. The helical transmembrane segment at 300-320 (HTTVAINVAIIPILCSVAMLI) threads the bilayer. The Intravirion portion of the chain corresponds to 321 to 405 (RICRIFKSMR…TTDSEEEIFP (85 aa)). The disordered stretch occupies residues 346 to 405 (LESEPRPRPSRTPSPGRNRRRSSTSSSSSRSTRRQRPVSTQALVSSVLPMTTDSEEEIFP). Polar residues predominate over residues 386–397 (QALVSSVLPMTT).

The protein belongs to the herpesviridae glycoprotein M family. Interacts (via N-terminus) with gN (via N-terminus). The gM-gN heterodimer forms the gCII complex.

Its subcellular location is the virion membrane. The protein localises to the host Golgi apparatus. It localises to the host trans-Golgi network. It is found in the host endosome membrane. The protein resides in the host nucleus inner membrane. Envelope glycoprotein important for virion assembly and egress. Plays a role in the correct incorporation of gH-gL into virion membrane. Directs the glycoprotein N (gN) to the host trans-Golgi network. The protein is Envelope glycoprotein M of Epstein-Barr virus (strain GD1) (HHV-4).